We begin with the raw amino-acid sequence, 775 residues long: MLQDSITGIVNSFNLFFPSTMSRPTLMPTCVAFCSILFLTLATGCQAFPKVERRETAQEYAEKEQSQKMNTDDQENISFAPKYMLQQMSSEAPMVLSEGPSEIPLIKVFSVNKESHLPGAGLLHPTSPGVYSSSEPVVSASEQEPGPSLLERMSSEHSLSKVMLTVAVSSPASLNPDQEGPYNSLSTQPIVAAVTDVTHGSLDYLDNQLFAAKSQEAVSLGNSPSSSINTKEPEIIKADAAMGTTVVPGVDSTGDMEPDRERPSEMAADDGQSTTTKYLVTIPNNFLTTEPTAGSILGDAKVTVSVSTAGPVSSIFNEEWDDTKFESISRGRPPEPGDNAETQMRTKPPHGTYESFEGTEESPSSTAVLKVAPGHLGGEPALGTALVTALGDERSPVLTHQISFTPMSLAEDPEVSTMKLFPSAGGFRASTQGDRTQLSSETAFSTSQYESVPQQEAGNVLKDITQERKMATQAMNTTSPVVTQEHMATIEVPRGSGEPEEGMPSLSPVPAEVADAELSRRGESLATPASTTVVPLSLKLTSSMEDLMDTITGPSEEFIPVLGSPMAPPAMTVEAPTISSALPSEGRTSPSISRPNTAASYGLEQLESEEVEDDEDEEDEEDEEEEEEDEEDEEDEEDKETDSLYKDFDGDTEPPGFTLPGITSQEPDIRSGSMDLLEVATYQVPETIEWEQQNQGLVRSWMEKLKDKAGYMSGMLVPVGVGIAGALFILGALYSIKVMNRRRRNGFKRHKRKQREFNSMQDRVMLLADSSEDEF.

An N-terminal signal peptide occupies residues 1–47 (MLQDSITGIVNSFNLFFPSTMSRPTLMPTCVAFCSILFLTLATGCQA). Residues 48 to 715 (FPKVERRETA…KDKAGYMSGM (668 aa)) are Extracellular-facing. The N-linked (GlcNAc...) asparagine glycan is linked to Asn76. Disordered regions lie at residues 120 to 148 (AGLLHPTSPGVYSSSEPVVSASEQEPGPS), 247 to 273 (VPGVDSTGDMEPDRERPSEMAADDGQS), and 324 to 366 (KFES…PSST). Over residues 129-142 (GVYSSSEPVVSASE) the composition is skewed to polar residues. Positions 324–335 (KFESISRGRPPE) are enriched in basic and acidic residues. Asn476 carries N-linked (GlcNAc...) asparagine glycosylation. Residues 559–669 (IPVLGSPMAP…PGITSQEPDI (111 aa)) are disordered. Residues 577-599 (TISSALPSEGRTSPSISRPNTAA) are compositionally biased toward polar residues. The span at 606–640 (LESEEVEDDEDEEDEEDEEEEEEDEEDEEDEEDKE) shows a compositional bias: acidic residues. The helical transmembrane segment at 716-736 (LVPVGVGIAGALFILGALYSI) threads the bilayer. At 737-775 (KVMNRRRRNGFKRHKRKQREFNSMQDRVMLLADSSEDEF) the chain is on the cytoplasmic side. Residues Ser770 and Ser771 each carry the phosphoserine modification.

As to quaternary structure, interacts with IL6ST; this interaction prevents IL6ST protein homodimerization and bridges ARMH4 with IL6R and STAT3 and therefore inhibits phosphorylation of STAT3 at 'Tyr-705'. Interacts (via cytoplasmic tail) with RICTOR; this interaction bridges ARMH4 to the mTORC2 complex and inhibits the mTORC2 kinase activity. Expressed in bone-marroew cells.

It localises to the membrane. In terms of biological role, may modulate immune response and may play a role in inflammation. Down-modulates STAT3 signaling throught direct interaction with IL6ST, resulting in the inhibition of phosphorylation of STAT3 at 'Tyr-705'. May negatively regulates AKT signaling by modulating the activity of mTORC2 complex through RICTOR interaction. This Mus musculus (Mouse) protein is Armadillo-like helical domain-containing protein 4.